Consider the following 124-residue polypeptide: MVKLTSIVAGVAAIAAGVAAAPATTTLSPSDERVNLVELGVYVSDIRAHLAEYYMFQAAHPTETYPVEIAEAVFNYGDFTTMLTGIPADQVTRVITGVPWYSTRLRPAISSALSKDGIYTAVPN.

An N-terminal signal peptide occupies residues 1–20; it reads MVKLTSIVAGVAAIAAGVAA.

It belongs to the SRP1/TIP1 family. Seripauperin subfamily. Post-translationally, O-glycosylated.

It localises to the secreted. Its subcellular location is the cell wall. In terms of biological role, component of the cell wall. The chain is Seripauperin-23 (PAU23) from Saccharomyces cerevisiae (strain ATCC 204508 / S288c) (Baker's yeast).